An 804-amino-acid polypeptide reads, in one-letter code: Probable phosphoketolase (804 aa).

This sequence belongs to the XFP family. Requires thiamine diphosphate as cofactor.

This Mycobacterium avium (strain 104) protein is Probable phosphoketolase.